We begin with the raw amino-acid sequence, 78 residues long: Protein Class8-like (78 aa).

Residues 1 to 19 form the signal peptide; the sequence is MRTLVVLLIGAVLLCSANA. A propeptide spanning residues 20 to 36 is cleaved from the precursor; it reads FLDELLAESVNDMTDKR. The ShKT domain maps to 38–78; it reads CFDKYKSNICGGVISPAHCVRRSGRMAKFAKENCAHFCGFC. 3 disulfides stabilise this stretch: C38–C78, C47–C71, and C56–C75.

As to expression, expressed in ganglion neurons residing in the mesoglea (observed in both planulae and primary polyps). Not expressed in nematocytes.

Functionally, probable neuropeptide. The sequence is that of Protein Class8-like from Nematostella vectensis (Starlet sea anemone).